We begin with the raw amino-acid sequence, 379 residues long: Pre-mRNA-processing protein 45 (379 aa).

Over residues 1 to 10 the composition is skewed to pro residues; that stretch reads MFSNRLPPPK. 2 disordered regions span residues 1 to 22 and 353 to 379; these read MFSN…ALSS and SEGA…NYGA. Positions 368-379 are enriched in basic and acidic residues; sequence AESDDKSDNYGA.

It belongs to the SNW family. As to quaternary structure, belongs to the CWC complex (or CEF1-associated complex), a spliceosome sub-complex reminiscent of a late-stage spliceosome composed of the U2, U5 and U6 snRNAs and at least BUD13, BUD31, BRR2, CDC40, CEF1, CLF1, CUS1, CWC2, CWC15, CWC21, CWC22, CWC23, CWC24, CWC25, CWC27, ECM2, HSH155, IST3, ISY1, LEA1, MSL1, NTC20, PRP8, PRP9, PRP11, PRP19, PRP21, PRP22, PRP45, PRP46, SLU7, SMB1, SMD1, SMD2, SMD3, SMX2, SMX3, SNT309, SNU114, SPP2, SYF1, SYF2, RSE1 and YJU2. Interacts with CLF1, PRP22 and PRP46. Interacts with SPP382.

The protein resides in the nucleus. In terms of biological role, involved in pre-mRNA splicing. Associated with the spliceosome throughout the splicing reactions, until after the second catalytic step. In Saccharomyces cerevisiae (strain ATCC 204508 / S288c) (Baker's yeast), this protein is Pre-mRNA-processing protein 45 (PRP45).